Reading from the N-terminus, the 336-residue chain is Protein SGT1 homolog (336 aa).

Ala-2 bears the N-acetylalanine mark. TPR repeat units follow at residues 11–44, 45–78, and 79–112; these read SQRL…NPDD, AQYY…NPNN, and CTAL…DSTD. A CS domain is found at 140-229; that stretch reads QSKIKYDWYQ…PEAVRWEKLE (90 aa). Thr-236 carries the post-translational modification Phosphothreonine. Residues 247-336 form the SGS domain; the sequence is MYPSSSHYTR…PPDDMEWKQY (90 aa). Ser-252 is subject to Phosphoserine. Thr-255 carries the post-translational modification Phosphothreonine. Lys-266 participates in a covalent cross-link: Glycyl lysine isopeptide (Lys-Gly) (interchain with G-Cter in SUMO1); alternate. Lys-266 participates in a covalent cross-link: Glycyl lysine isopeptide (Lys-Gly) (interchain with G-Cter in SUMO2); alternate. At Ser-302 the chain carries Phosphoserine.

The protein belongs to the SGT1 family. Probably associates with SCF (SKP1-CUL1-F-box protein) complex through interaction with SKP1. Interacts with S100A6. Interacts with HSP90. Post-translationally, phosphorylated at Ser-252 and Ser-302, dephosphorylation promotes nuclear translocation, most likely due to disruption of the SUGT1-HSP90 complex.

The protein localises to the cytoplasm. It localises to the nucleus. In terms of biological role, may play a role in ubiquitination and subsequent proteasomal degradation of target proteins. This chain is Protein SGT1 homolog, found in Mus musculus (Mouse).